A 512-amino-acid chain; its full sequence is Keratin, type I cytoskeletal 24 (512 aa).

The segment at Met-1–Gly-21 is disordered. The head stretch occupies residues Met-1 to Ser-140. Over residues Gly-8 to Gly-21 the composition is skewed to low complexity. The tract at residues Glu-141–Trp-176 is coil 1A. Residues Glu-141–Cys-455 enclose the IF rod domain. The tract at residues Tyr-177–Ile-197 is linker 1. The interval Ile-198–Met-289 is coil 1B. Residues Gln-290–Leu-312 form a linker 12 region. Residues Leu-313–Asp-451 form a coil 2 region. The tail stretch occupies residues Gly-452–Lys-512.

It belongs to the intermediate filament family. In terms of assembly, heterotetramer of two type I and two type II keratins.

In Mus musculus (Mouse), this protein is Keratin, type I cytoskeletal 24 (Krt24).